Reading from the N-terminus, the 150-residue chain is uncharacterized protein (150 aa).

The next 3 membrane-spanning stretches (helical) occupy residues 50 to 70, 80 to 100, and 127 to 147; these read VVSV…VIHL, LYIT…QLWL, and KVVI…FFIE.

It is found in the membrane. This is an uncharacterized protein from Schizosaccharomyces pombe (strain 972 / ATCC 24843) (Fission yeast).